The chain runs to 313 residues: 4-hydroxy-3-methylbut-2-enyl diphosphate reductase (313 aa).

Cys-12 contributes to the [4Fe-4S] cluster binding site. The (2E)-4-hydroxy-3-methylbut-2-enyl diphosphate site is built by His-41 and His-74. Dimethylallyl diphosphate is bound by residues His-41 and His-74. Isopentenyl diphosphate-binding residues include His-41 and His-74. Position 96 (Cys-96) interacts with [4Fe-4S] cluster. His-124 contributes to the (2E)-4-hydroxy-3-methylbut-2-enyl diphosphate binding site. His-124 provides a ligand contact to dimethylallyl diphosphate. His-124 serves as a coordination point for isopentenyl diphosphate. Residue Glu-126 is the Proton donor of the active site. (2E)-4-hydroxy-3-methylbut-2-enyl diphosphate is bound at residue Thr-167. Cys-197 contributes to the [4Fe-4S] cluster binding site. (2E)-4-hydroxy-3-methylbut-2-enyl diphosphate is bound by residues Ser-225, Ser-226, Asn-227, and Ser-269. Residues Ser-225, Ser-226, Asn-227, and Ser-269 each coordinate dimethylallyl diphosphate. Isopentenyl diphosphate is bound by residues Ser-225, Ser-226, Asn-227, and Ser-269.

It belongs to the IspH family. Requires [4Fe-4S] cluster as cofactor.

It catalyses the reaction isopentenyl diphosphate + 2 oxidized [2Fe-2S]-[ferredoxin] + H2O = (2E)-4-hydroxy-3-methylbut-2-enyl diphosphate + 2 reduced [2Fe-2S]-[ferredoxin] + 2 H(+). The enzyme catalyses dimethylallyl diphosphate + 2 oxidized [2Fe-2S]-[ferredoxin] + H2O = (2E)-4-hydroxy-3-methylbut-2-enyl diphosphate + 2 reduced [2Fe-2S]-[ferredoxin] + 2 H(+). Its pathway is isoprenoid biosynthesis; dimethylallyl diphosphate biosynthesis; dimethylallyl diphosphate from (2E)-4-hydroxy-3-methylbutenyl diphosphate: step 1/1. It functions in the pathway isoprenoid biosynthesis; isopentenyl diphosphate biosynthesis via DXP pathway; isopentenyl diphosphate from 1-deoxy-D-xylulose 5-phosphate: step 6/6. Functionally, catalyzes the conversion of 1-hydroxy-2-methyl-2-(E)-butenyl 4-diphosphate (HMBPP) into a mixture of isopentenyl diphosphate (IPP) and dimethylallyl diphosphate (DMAPP). Acts in the terminal step of the DOXP/MEP pathway for isoprenoid precursor biosynthesis. The protein is 4-hydroxy-3-methylbut-2-enyl diphosphate reductase of Methylococcus capsulatus (strain ATCC 33009 / NCIMB 11132 / Bath).